We begin with the raw amino-acid sequence, 552 residues long: CTP synthase (552 aa).

Residues 1–270 form an amidoligase domain region; it reads MTKYVFVTGG…DRIICEELKL (270 aa). Residue serine 13 coordinates CTP. Serine 13 serves as a coordination point for UTP. ATP contacts are provided by residues 14-19 and aspartate 71; that span reads SLGKGI. Positions 71 and 144 each coordinate Mg(2+). Residues 151–153, 191–196, and lysine 227 each bind CTP; these read DIE and KTKPTQ. UTP contacts are provided by residues 191 to 196 and lysine 227; that span reads KTKPTQ. Residues 295–547 enclose the Glutamine amidotransferase type-1 domain; sequence TIGMVGKYVD…VEAALANKQA (253 aa). Glycine 356 contributes to the L-glutamine binding site. Cysteine 383 serves as the catalytic Nucleophile; for glutamine hydrolysis. Residues 384–387, glutamate 407, and arginine 473 each bind L-glutamine; that span reads LGMQ. Active-site residues include histidine 520 and glutamate 522.

Belongs to the CTP synthase family. In terms of assembly, homotetramer.

It carries out the reaction UTP + L-glutamine + ATP + H2O = CTP + L-glutamate + ADP + phosphate + 2 H(+). The catalysed reaction is L-glutamine + H2O = L-glutamate + NH4(+). It catalyses the reaction UTP + NH4(+) + ATP = CTP + ADP + phosphate + 2 H(+). It participates in pyrimidine metabolism; CTP biosynthesis via de novo pathway; CTP from UDP: step 2/2. Allosterically activated by GTP, when glutamine is the substrate; GTP has no effect on the reaction when ammonia is the substrate. The allosteric effector GTP functions by stabilizing the protein conformation that binds the tetrahedral intermediate(s) formed during glutamine hydrolysis. Inhibited by the product CTP, via allosteric rather than competitive inhibition. Its function is as follows. Catalyzes the ATP-dependent amination of UTP to CTP with either L-glutamine or ammonia as the source of nitrogen. Regulates intracellular CTP levels through interactions with the four ribonucleotide triphosphates. The sequence is that of CTP synthase from Burkholderia cenocepacia (strain ATCC BAA-245 / DSM 16553 / LMG 16656 / NCTC 13227 / J2315 / CF5610) (Burkholderia cepacia (strain J2315)).